The chain runs to 479 residues: Aspartyl/glutamyl-tRNA(Asn/Gln) amidotransferase subunit B (479 aa).

The protein belongs to the GatB/GatE family. GatB subfamily. Heterotrimer of A, B and C subunits.

It catalyses the reaction L-glutamyl-tRNA(Gln) + L-glutamine + ATP + H2O = L-glutaminyl-tRNA(Gln) + L-glutamate + ADP + phosphate + H(+). It carries out the reaction L-aspartyl-tRNA(Asn) + L-glutamine + ATP + H2O = L-asparaginyl-tRNA(Asn) + L-glutamate + ADP + phosphate + 2 H(+). Allows the formation of correctly charged Asn-tRNA(Asn) or Gln-tRNA(Gln) through the transamidation of misacylated Asp-tRNA(Asn) or Glu-tRNA(Gln) in organisms which lack either or both of asparaginyl-tRNA or glutaminyl-tRNA synthetases. The reaction takes place in the presence of glutamine and ATP through an activated phospho-Asp-tRNA(Asn) or phospho-Glu-tRNA(Gln). The protein is Aspartyl/glutamyl-tRNA(Asn/Gln) amidotransferase subunit B of Streptococcus mutans serotype c (strain ATCC 700610 / UA159).